The following is a 273-amino-acid chain: 4-hydroxy-tetrahydrodipicolinate reductase (273 aa).

NAD(+)-binding positions include 12–17 (GAGGRM) and Glu-38. Arg-39 is a binding site for NADP(+). NAD(+) is bound by residues 102–104 (GTT) and 126–129 (AANF). His-159 (proton donor/acceptor) is an active-site residue. His-160 provides a ligand contact to (S)-2,3,4,5-tetrahydrodipicolinate. Residue Lys-163 is the Proton donor of the active site. 169–170 (GT) provides a ligand contact to (S)-2,3,4,5-tetrahydrodipicolinate.

The protein belongs to the DapB family. As to quaternary structure, homotetramer.

Its subcellular location is the cytoplasm. It carries out the reaction (S)-2,3,4,5-tetrahydrodipicolinate + NAD(+) + H2O = (2S,4S)-4-hydroxy-2,3,4,5-tetrahydrodipicolinate + NADH + H(+). It catalyses the reaction (S)-2,3,4,5-tetrahydrodipicolinate + NADP(+) + H2O = (2S,4S)-4-hydroxy-2,3,4,5-tetrahydrodipicolinate + NADPH + H(+). Its pathway is amino-acid biosynthesis; L-lysine biosynthesis via DAP pathway; (S)-tetrahydrodipicolinate from L-aspartate: step 4/4. Its function is as follows. Catalyzes the conversion of 4-hydroxy-tetrahydrodipicolinate (HTPA) to tetrahydrodipicolinate. This chain is 4-hydroxy-tetrahydrodipicolinate reductase, found in Yersinia enterocolitica serotype O:8 / biotype 1B (strain NCTC 13174 / 8081).